A 247-amino-acid chain; its full sequence is Uridylate kinase (247 aa).

21–24 is a binding site for ATP; it reads KVSG. Glycine 63 serves as a coordination point for UMP. Glycine 64 and arginine 68 together coordinate ATP. Residues aspartate 83 and 144–151 contribute to the UMP site; that span reads TGNPFCTT. 4 residues coordinate ATP: threonine 171, glutamine 172, tyrosine 177, and aspartate 180.

Belongs to the UMP kinase family. As to quaternary structure, homohexamer.

The protein resides in the cytoplasm. The enzyme catalyses UMP + ATP = UDP + ADP. The protein operates within pyrimidine metabolism; CTP biosynthesis via de novo pathway; UDP from UMP (UMPK route): step 1/1. Inhibited by UTP. Its function is as follows. Catalyzes the reversible phosphorylation of UMP to UDP. This is Uridylate kinase from Rickettsia rickettsii (strain Sheila Smith).